The sequence spans 308 residues: uncharacterized protein (308 aa).

The next 10 helical transmembrane spans lie at 45-65 (LGLA…KIAL), 69-89 (SPFA…LPFL), 100-120 (IGIA…YTTA), 122-142 (NAGF…WLVY), 151-171 (VSGV…SGFN), 172-192 (IGDI…AMIS), 201-221 (TMLA…FAVF), 226-246 (FEIN…ATFV), 263-283 (AAVI…AVLA), and 285-305 (ILTP…IIVS). 2 consecutive EamA domains span residues 52 to 166 (LIWG…FLSG) and 178 to 306 (LFCA…IVSL).

It belongs to the EamA transporter family.

The protein localises to the cell membrane. This is an uncharacterized protein from Archaeoglobus fulgidus (strain ATCC 49558 / DSM 4304 / JCM 9628 / NBRC 100126 / VC-16).